The sequence spans 263 residues: MQSIYLAKIREQNPLIHNITNIVAANFSANGLLALGASPLMSANVEEMQEVPKISQALVINIGTLIGKDREAMLQAGKTANEVGIPVVLDPVGVGATSYRRETVRQLLAEVKFTLIRGNAGELAAIAGEAWQAKGVDAGKGEVDLKAVAEKVAQRYGCTALISGAVDIVSDGTQTATIHNGTPLFPKVTASGCLLSAVCAAFLAVSEGNYFSATLEACVAYTIAGERAAQSLTTQVGQFQIRLLDELAALSPETIRQRGRINE.

Residue methionine 41 participates in substrate binding. ATP contacts are provided by arginine 117 and serine 163. Alanine 190 contributes to the substrate binding site.

It belongs to the Thz kinase family. The cofactor is Mg(2+).

The enzyme catalyses 5-(2-hydroxyethyl)-4-methylthiazole + ATP = 4-methyl-5-(2-phosphooxyethyl)-thiazole + ADP + H(+). It participates in cofactor biosynthesis; thiamine diphosphate biosynthesis; 4-methyl-5-(2-phosphoethyl)-thiazole from 5-(2-hydroxyethyl)-4-methylthiazole: step 1/1. Catalyzes the phosphorylation of the hydroxyl group of 4-methyl-5-beta-hydroxyethylthiazole (THZ). The sequence is that of Hydroxyethylthiazole kinase from Haemophilus influenzae (strain PittEE).